A 1039-amino-acid polypeptide reads, in one-letter code: Integrin alpha-IIb (1039 aa).

The first 31 residues, methionine 1 to alanine 31, serve as a signal peptide directing secretion. The Extracellular portion of the chain corresponds to leucine 32 to arginine 993. FG-GAP repeat units lie at residues aspartate 35–cysteine 96, valine 110–glutamate 173, valine 187–tyrosine 238, serine 251–tyrosine 305, glutamine 306–leucine 371, alanine 373–serine 432, and serine 435–serine 496. N-linked (GlcNAc...) asparagine glycosylation occurs at asparagine 46. 3 cysteine pairs are disulfide-bonded: cysteine 87–cysteine 96, cysteine 138–cysteine 161, and cysteine 177–cysteine 198. Ca(2+) contacts are provided by glutamate 274, aspartate 276, and aspartate 278. Asparagine 280 carries an N-linked (GlcNAc...) asparagine glycan. Threonine 281, glutamate 283, aspartate 328, asparagine 330, aspartate 332, arginine 334, aspartate 336, aspartate 396, aspartate 398, aspartate 400, tyrosine 402, aspartate 404, aspartate 457, aspartate 459, asparagine 461, tyrosine 463, and aspartate 465 together coordinate Ca(2+). Disulfide bonds link cysteine 504/cysteine 515 and cysteine 521/cysteine 576. N-linked (GlcNAc...) asparagine glycosylation is present at asparagine 601. Cystine bridges form between cysteine 633–cysteine 639, cysteine 705–cysteine 718, cysteine 857–cysteine 921, and cysteine 911–cysteine 916. An N-linked (GlcNAc...) asparagine glycan is attached at asparagine 711. Residue isoleucine 874 is glycosylated (O-linked (GalNAc...) serine; in variant S-874). Serine 878 carries an O-linked (GalNAc...) serine glycan. Glutamine 891 is subject to Pyrrolidone carboxylic acid; in light chain form 1. The N-linked (GlcNAc...) asparagine glycan is linked to asparagine 962. A helical transmembrane segment spans residues alanine 994 to tryptophan 1019. Residues lysine 1020–glutamate 1039 lie on the Cytoplasmic side of the membrane. Positions glycine 1022–arginine 1026 match the GFFKR motif motif.

It belongs to the integrin alpha chain family. Heterodimer of an alpha and a beta subunit. The alpha subunit is composed of a heavy and a light chain linked by a disulfide bond. Alpha-IIb associates with beta-3. Directly interacts with RNF181. Interacts (via C-terminus cytoplasmic tail region) with CIB1; the interaction is direct and calcium-dependent. Interacts (via C-terminus cytoplasmic tail region) with CIB2, CIB3 and CIB4; the interactions are stabilized/increased in a calcium and magnesium-dependent manner. ITGA2B:ITGB3 interacts with PPIA/CYPA; the interaction is ROS and PPIase activity-dependent and is increased in the presence of thrombin. ITGA2B:ITGB3 interacts with SELP (via C-type lectin domain); the interaction mediates cell-cell interaction and adhesion. Post-translationally, cleaved by ELANE; the cleavage promotes activation of platelet fibrinogen receptor integrin alpha-IIb/beta-3. Isoform 1 and isoform 2 are expressed in platelets and megakaryocytes, but not in reticulocytes. Not detected in Jurkat, nor in U937 cell lines. Isoform 3 is expressed in prostate adenocarcinoma, as well as in several erythroleukemia, prostate adenocarcinoma and melanoma cell lines, including PC-3, DU-145, HEL, WM983A, WM983B and WM35. Not detected in platelets, nor in normal prostate (at protein level).

It is found in the membrane. Functionally, integrin alpha-IIb/beta-3 is a receptor for fibronectin, fibrinogen, plasminogen, prothrombin, thrombospondin and vitronectin. It recognizes the sequence R-G-D in a wide array of ligands. It recognizes the sequence H-H-L-G-G-G-A-K-Q-A-G-D-V in fibrinogen gamma chain. Following activation integrin alpha-IIb/beta-3 brings about platelet/platelet interaction through binding of soluble fibrinogen. This step leads to rapid platelet aggregation which physically plugs ruptured endothelial cell surface. The sequence is that of Integrin alpha-IIb (ITGA2B) from Homo sapiens (Human).